We begin with the raw amino-acid sequence, 242 residues long: Biosynthetic peptidoglycan transglycosylase (242 aa).

The helical transmembrane segment at Leu-19–Val-39 threads the bilayer.

It belongs to the glycosyltransferase 51 family.

It localises to the cell inner membrane. It catalyses the reaction [GlcNAc-(1-&gt;4)-Mur2Ac(oyl-L-Ala-gamma-D-Glu-L-Lys-D-Ala-D-Ala)](n)-di-trans,octa-cis-undecaprenyl diphosphate + beta-D-GlcNAc-(1-&gt;4)-Mur2Ac(oyl-L-Ala-gamma-D-Glu-L-Lys-D-Ala-D-Ala)-di-trans,octa-cis-undecaprenyl diphosphate = [GlcNAc-(1-&gt;4)-Mur2Ac(oyl-L-Ala-gamma-D-Glu-L-Lys-D-Ala-D-Ala)](n+1)-di-trans,octa-cis-undecaprenyl diphosphate + di-trans,octa-cis-undecaprenyl diphosphate + H(+). It participates in cell wall biogenesis; peptidoglycan biosynthesis. Its function is as follows. Peptidoglycan polymerase that catalyzes glycan chain elongation from lipid-linked precursors. The protein is Biosynthetic peptidoglycan transglycosylase of Klebsiella oxytoca.